The chain runs to 174 residues: Ribosome maturation factor RimM (174 aa).

The PRC barrel domain maps to 97-171; sequence EGYYYDFDII…RMVIDPIPGL (75 aa).

Belongs to the RimM family. Binds ribosomal protein uS19.

The protein localises to the cytoplasm. An accessory protein needed during the final step in the assembly of 30S ribosomal subunit, possibly for assembly of the head region. Essential for efficient processing of 16S rRNA. May be needed both before and after RbfA during the maturation of 16S rRNA. It has affinity for free ribosomal 30S subunits but not for 70S ribosomes. This is Ribosome maturation factor RimM from Symbiobacterium thermophilum (strain DSM 24528 / JCM 14929 / IAM 14863 / T).